Here is a 966-residue protein sequence, read N- to C-terminus: LRR receptor-like serine/threonine-protein kinase ERL1 (966 aa).

The signal sequence occupies residues 1 to 25 (MKEKMQRMVLSLAMVGFMVFGVASA). Residues 26 to 582 (MNNEGKALMA…PLPKSRVFSR (557 aa)) are Extracellular-facing. One copy of the LRR 1 repeat lies at 40–63 (FSNLVNMLLDWDDVHNSDLCSWRG). Asn68 and Asn77 each carry an N-linked (GlcNAc...) asparagine glycan. LRR repeat units follow at residues 75 to 94 (SLNL…IGDL), 95 to 118 (RNLQ…IGNC), 120 to 142 (SLVY…ISKL), 143 to 166 (KQLE…LTQI), 168 to 190 (NLKR…LYWN), 192 to 214 (VLQY…MCQL), 215 to 238 (TGLW…IGNC), 239 to 261 (TSFQ…NIGF), 262 to 285 (LQVA…IGLM), 286 to 311 (QALA…NLSF), 313 to 333 (GKLY…LGNM), 334 to 357 (SRLS…LGKL), 359 to 381 (QLFE…ISSC), 383 to 404 (ALNQ…AFRN), 405 to 429 (LGSL…LGHI), 431 to 453 (NLDK…LGDL), 454 to 476 (EHLL…EFGN), 478 to 500 (RSIQ…ELGQ), 501 to 525 (LQNL…LTNC), and 527 to 550 (TLVN…NFSR). Asn226 and Asn237 each carry an N-linked (GlcNAc...) asparagine glycan. Residues Asn308 and Asn332 are each glycosylated (N-linked (GlcNAc...) asparagine). N-linked (GlcNAc...) asparagine glycosylation occurs at Asn377. Asn412, Asn441, and Asn460 each carry an N-linked (GlcNAc...) asparagine glycan. Residues Asn532, Asn537, and Asn547 are each glycosylated (N-linked (GlcNAc...) asparagine). The helical transmembrane segment at 583–603 (GALICIVLGVITLLCMIFLAV) threads the bilayer. Over 604–966 (YKSMQQKKIL…FREVISKSSI (363 aa)) the chain is Cytoplasmic. A phosphothreonine mark is found at Thr637 and Thr645. The 274-residue stretch at 648–921 (LNEKFIIGYG…RVLLSLVPSL (274 aa)) folds into the Protein kinase domain. ATP is bound by residues 654-662 (IGYGASSTV) and Lys676. Residues Tyr721 and Tyr760 each carry the phosphotyrosine modification. The Proton acceptor role is filled by Asp773. Phosphotyrosine is present on Tyr815. Residue Thr823 is modified to Phosphothreonine.

This sequence belongs to the protein kinase superfamily. Ser/Thr protein kinase family. As to quaternary structure, homodimer and heterodimer with ERECTA and TMM. Interacts with EPF1 and EPF2. Interacts with SERK1, SERK2, SERK3/BAK1 and SERK4 in a EPF1-induced manner. Mostly expressed in developing organs, including bud clusters, flowers, siliques and young rosettes. Also detected in mature aboveground organs, such as leaves, stems and pedicels, but barely in roots.

Its subcellular location is the cell membrane. It catalyses the reaction L-seryl-[protein] + ATP = O-phospho-L-seryl-[protein] + ADP + H(+). It carries out the reaction L-threonyl-[protein] + ATP = O-phospho-L-threonyl-[protein] + ADP + H(+). Functionally, receptor kinase that regulates inflorescence architecture and organ shape as well as stomatal patterning, including density and clustering, together with ER and ERL2. Redundantly involved with ER in procambial development regulation. Forms a functional ligand-receptor pair with EPF1 (AC Q8S8I4). Forms a constitutive complex with TMM involved in the recognition of the stomatal regulatory peptides EPF1, EPF2 and EPFL9/STOMAGEN. In Arabidopsis thaliana (Mouse-ear cress), this protein is LRR receptor-like serine/threonine-protein kinase ERL1.